The sequence spans 284 residues: tRNA uridine(34) hydroxylase (284 aa).

One can recognise a Rhodanese domain in the interval 132 to 226 (DGRPVVMLDT…YFEEVGGAHY (95 aa)). The Cysteine persulfide intermediate role is filled by cysteine 186.

It belongs to the TrhO family.

The enzyme catalyses uridine(34) in tRNA + AH2 + O2 = 5-hydroxyuridine(34) in tRNA + A + H2O. Its function is as follows. Catalyzes oxygen-dependent 5-hydroxyuridine (ho5U) modification at position 34 in tRNAs. The polypeptide is tRNA uridine(34) hydroxylase (Burkholderia vietnamiensis (strain G4 / LMG 22486) (Burkholderia cepacia (strain R1808))).